The sequence spans 160 residues: Nucleotide-binding protein Bpet3698 (160 aa).

The protein belongs to the YajQ family.

Its function is as follows. Nucleotide-binding protein. The chain is Nucleotide-binding protein Bpet3698 from Bordetella petrii (strain ATCC BAA-461 / DSM 12804 / CCUG 43448).